A 191-amino-acid polypeptide reads, in one-letter code: Protein Ves (191 aa).

The protein belongs to the Ves family.

The sequence is that of Protein Ves from Escherichia coli (strain SE11).